Here is a 1354-residue protein sequence, read N- to C-terminus: Enhancer of mRNA-decapping protein 4 homolog (1354 aa).

The disordered stretch occupies residues 18-38 (PLSASSSPPPSVHRSPRCGKA). A Phosphoserine modification is found at Ser32. 2 WD repeats span residues 309 to 348 (EEDS…VRNH) and 363 to 406 (CSLF…CLQT). The segment at 552–581 (ERSSLNSKRSQTPEDNLLIKEEPESPNSGT) is disordered. Polar residues predominate over residues 554–565 (SSLNSKRSQTPE). The residue at position 561 (Ser561) is a Phosphoserine. Thr563 is modified (phosphothreonine). The residue at position 576 (Ser576) is a Phosphoserine. Residue Thr581 is modified to Phosphothreonine. 3 positions are modified to phosphoserine: Ser759, Ser762, and Ser763. Residues 765 to 803 (SREVQEIMATQDDADAYEAELENLDDDDDDEEEELANSS) are a coiled coil. Acidic residues predominate over residues 788 to 799 (LDDDDDDEEEEL). 2 disordered regions span residues 788 to 811 (LDDD…AVDG) and 838 to 884 (NTNN…AGGT). Over residues 853 to 884 (NNNTSVGSNSNNNTATTLSTSNTSSSNNAGGT) the composition is skewed to low complexity. 3 coiled-coil regions span residues 893 to 936 (ELNA…HSKQ), 969 to 1036 (NEHK…QAQM), and 1159 to 1188 (KHRT…QVQE). Residue Ser1207 is modified to Phosphoserine. 2 positions are modified to phosphothreonine: Thr1211 and Thr1317. A Phosphotyrosine modification is found at Tyr1320.

Belongs to the WD repeat EDC4 family. Homodimer. Interacts with Dcp1 and Dcp2. Interacts with Gyf.

It localises to the cytoplasm. The protein resides in the P-body. Functionally, in the process of mRNA degradation, seems to play a role in mRNA decapping. Required for silencing a subset of endogenous miRNA targets. The chain is Enhancer of mRNA-decapping protein 4 homolog (Ge-1) from Drosophila melanogaster (Fruit fly).